The chain runs to 63 residues: Large ribosomal subunit protein uL29 (63 aa).

It belongs to the universal ribosomal protein uL29 family.

This is Large ribosomal subunit protein uL29 from Neisseria meningitidis serogroup C (strain 053442).